The sequence spans 330 residues: Aspartate--ammonia ligase (330 aa).

Belongs to the class-II aminoacyl-tRNA synthetase family. AsnA subfamily.

The protein localises to the cytoplasm. It carries out the reaction L-aspartate + NH4(+) + ATP = L-asparagine + AMP + diphosphate + H(+). It participates in amino-acid biosynthesis; L-asparagine biosynthesis; L-asparagine from L-aspartate (ammonia route): step 1/1. This chain is Aspartate--ammonia ligase, found in Glaesserella parasuis serovar 5 (strain SH0165) (Haemophilus parasuis).